A 1109-amino-acid chain; its full sequence is Protein argonaute 3 (1109 aa).

A compositionally biased stretch (basic and acidic residues) spans 1 to 13; that stretch reads MAGRGGRDPRRGY. 2 disordered regions span residues 1 to 83 and 125 to 220; these read MAGR…GLVR and DHRD…PLSK. Composition is skewed to gly residues over residues 14 to 30, 37 to 54, and 62 to 83; these read DGGYGYPRGGGGQGGTN, RGGGRNGPRGGRFPGGRG, and DVLGGGQGGGRGTTAGAGGLVR. A compositionally biased stretch (basic and acidic residues) spans 125–134; sequence DHRDQHDHQS. The span at 135–161 shows a compositional bias: basic residues; sequence QRHHHRHHHHQRQRHHHHHQRQQRRGS. The 111-residue stretch at 411–521 folds into the PAZ domain; that stretch reads SVLDLVKTMK…VPIEFCNIPE (111 aa). Positions 527 to 545 are enriched in basic and acidic residues; the sequence is VARLDDKKSDNKGEQEKPS. The disordered stretch occupies residues 527 to 548; that stretch reads VARLDDKKSDNKGEQEKPSTKT. The Piwi domain occupies 720 to 1023; sequence LLFCPMLNRC…AAYRGRLYYE (304 aa).

This sequence belongs to the argonaute family. Ago subfamily.

Probably involved in the RNA silencing pathway. May bind to short RNAs such as microRNAs (miRNAs) or short interfering RNAs (siRNAs), and represses the translation of mRNAs which are complementary to them. In Oryza sativa subsp. japonica (Rice), this protein is Protein argonaute 3 (AGO3).